Here is a 284-residue protein sequence, read N- to C-terminus: 2-dehydro-3-deoxyphosphooctonate aldolase (284 aa).

This sequence belongs to the KdsA family.

It is found in the cytoplasm. The catalysed reaction is D-arabinose 5-phosphate + phosphoenolpyruvate + H2O = 3-deoxy-alpha-D-manno-2-octulosonate-8-phosphate + phosphate. It participates in carbohydrate biosynthesis; 3-deoxy-D-manno-octulosonate biosynthesis; 3-deoxy-D-manno-octulosonate from D-ribulose 5-phosphate: step 2/3. The protein operates within bacterial outer membrane biogenesis; lipopolysaccharide biosynthesis. The protein is 2-dehydro-3-deoxyphosphooctonate aldolase of Burkholderia multivorans (strain ATCC 17616 / 249).